Here is a 932-residue protein sequence, read N- to C-terminus: 2-oxoglutarate dehydrogenase E1 component (932 aa).

The protein belongs to the alpha-ketoglutarate dehydrogenase family. As to quaternary structure, homodimer. Part of the 2-oxoglutarate dehydrogenase (OGDH) complex composed of E1 (2-oxoglutarate dehydrogenase), E2 (dihydrolipoamide succinyltransferase) and E3 (dihydrolipoamide dehydrogenase); the complex contains multiple copies of the three enzymatic components (E1, E2 and E3). The cofactor is thiamine diphosphate.

The catalysed reaction is N(6)-[(R)-lipoyl]-L-lysyl-[protein] + 2-oxoglutarate + H(+) = N(6)-[(R)-S(8)-succinyldihydrolipoyl]-L-lysyl-[protein] + CO2. Its function is as follows. E1 component of the 2-oxoglutarate dehydrogenase (OGDH) complex which catalyzes the decarboxylation of 2-oxoglutarate, the first step in the conversion of 2-oxoglutarate to succinyl-CoA and CO(2). The chain is 2-oxoglutarate dehydrogenase E1 component from Staphylococcus aureus (strain USA300).